Consider the following 110-residue polypeptide: UPF0122 protein SAR1212 (110 aa).

The protein belongs to the UPF0122 family.

Its function is as follows. Might take part in the signal recognition particle (SRP) pathway. This is inferred from the conservation of its genetic proximity to ftsY/ffh. May be a regulatory protein. This Staphylococcus aureus (strain MRSA252) protein is UPF0122 protein SAR1212.